The following is a 418-amino-acid chain: Gamma-glutamyl phosphate reductase (418 aa).

The protein belongs to the gamma-glutamyl phosphate reductase family.

Its subcellular location is the cytoplasm. The enzyme catalyses L-glutamate 5-semialdehyde + phosphate + NADP(+) = L-glutamyl 5-phosphate + NADPH + H(+). It functions in the pathway amino-acid biosynthesis; L-proline biosynthesis; L-glutamate 5-semialdehyde from L-glutamate: step 2/2. Catalyzes the NADPH-dependent reduction of L-glutamate 5-phosphate into L-glutamate 5-semialdehyde and phosphate. The product spontaneously undergoes cyclization to form 1-pyrroline-5-carboxylate. This Desulfatibacillum aliphaticivorans protein is Gamma-glutamyl phosphate reductase.